Here is a 95-residue protein sequence, read N- to C-terminus: Aspartyl/glutamyl-tRNA(Asn/Gln) amidotransferase subunit C (95 aa).

The protein belongs to the GatC family. As to quaternary structure, heterotrimer of A, B and C subunits.

It carries out the reaction L-glutamyl-tRNA(Gln) + L-glutamine + ATP + H2O = L-glutaminyl-tRNA(Gln) + L-glutamate + ADP + phosphate + H(+). The catalysed reaction is L-aspartyl-tRNA(Asn) + L-glutamine + ATP + H2O = L-asparaginyl-tRNA(Asn) + L-glutamate + ADP + phosphate + 2 H(+). Allows the formation of correctly charged Asn-tRNA(Asn) or Gln-tRNA(Gln) through the transamidation of misacylated Asp-tRNA(Asn) or Glu-tRNA(Gln) in organisms which lack either or both of asparaginyl-tRNA or glutaminyl-tRNA synthetases. The reaction takes place in the presence of glutamine and ATP through an activated phospho-Asp-tRNA(Asn) or phospho-Glu-tRNA(Gln). The chain is Aspartyl/glutamyl-tRNA(Asn/Gln) amidotransferase subunit C from Methylobacterium radiotolerans (strain ATCC 27329 / DSM 1819 / JCM 2831 / NBRC 15690 / NCIMB 10815 / 0-1).